Here is a 482-residue protein sequence, read N- to C-terminus: tRNA sulfurtransferase (482 aa).

Residues 61–165 (QQVLEILTTT…DDKLNQILAH (105 aa)) form the THUMP domain. ATP contacts are provided by residues 183-184 (LI), lysine 265, glycine 287, and glutamine 296. Cysteine 344 and cysteine 456 are joined by a disulfide. Residues 404-482 (IEEHAVVLDI…GFNNVKVYRP (79 aa)) enclose the Rhodanese domain. Residue cysteine 456 is the Cysteine persulfide intermediate of the active site.

This sequence belongs to the ThiI family.

It localises to the cytoplasm. It carries out the reaction [ThiI sulfur-carrier protein]-S-sulfanyl-L-cysteine + a uridine in tRNA + 2 reduced [2Fe-2S]-[ferredoxin] + ATP + H(+) = [ThiI sulfur-carrier protein]-L-cysteine + a 4-thiouridine in tRNA + 2 oxidized [2Fe-2S]-[ferredoxin] + AMP + diphosphate. The enzyme catalyses [ThiS sulfur-carrier protein]-C-terminal Gly-Gly-AMP + S-sulfanyl-L-cysteinyl-[cysteine desulfurase] + AH2 = [ThiS sulfur-carrier protein]-C-terminal-Gly-aminoethanethioate + L-cysteinyl-[cysteine desulfurase] + A + AMP + 2 H(+). It participates in cofactor biosynthesis; thiamine diphosphate biosynthesis. Catalyzes the ATP-dependent transfer of a sulfur to tRNA to produce 4-thiouridine in position 8 of tRNAs, which functions as a near-UV photosensor. Also catalyzes the transfer of sulfur to the sulfur carrier protein ThiS, forming ThiS-thiocarboxylate. This is a step in the synthesis of thiazole, in the thiamine biosynthesis pathway. The sulfur is donated as persulfide by IscS. This chain is tRNA sulfurtransferase, found in Vibrio vulnificus (strain YJ016).